A 452-amino-acid polypeptide reads, in one-letter code: Phosphoglucosamine mutase (452 aa).

S108 (phosphoserine intermediate) is an active-site residue. S108, D247, D249, and D251 together coordinate Mg(2+). S108 carries the phosphoserine modification.

The protein belongs to the phosphohexose mutase family. Mg(2+) serves as cofactor. Activated by phosphorylation.

It carries out the reaction alpha-D-glucosamine 1-phosphate = D-glucosamine 6-phosphate. Functionally, catalyzes the conversion of glucosamine-6-phosphate to glucosamine-1-phosphate. The chain is Phosphoglucosamine mutase from Burkholderia pseudomallei (strain 668).